Here is a 474-residue protein sequence, read N- to C-terminus: MEKGLALPQDCRDLVHNLKIRGRYVLFLAFVVIVFIFIEKENKIISRVSDKLKQIPQFVADANSTDPALLLSENASLLSLSELDSTFSHLRSRLHNLSLQLGIAPAMEAQGQEAVAEKPSQQAGAGTRRHVLLMATTRTGSSFVGEFFNQQGNIFYLFEPLWHIERTVFFQQGGASAAGSALVYRDVLKQLLLCDLYVLEPFISPPPEDHLTQFLFRRGSSRSLCEDPVCTPFVKKVFEKYHCRNRHCGPLNVTLAAEACRRKDHMALKVVRIRQLEFLQPLAEDPRLDLRVIQLVRDPRAVLASRMVAFAGKYESWKKWLSEGQDQLSENEVQRLRGNCENIRLSAELGLRQPAWLRGRYMLVRYEDVARRPLQKAREMYRSAGIPLTPQVEDWIQKNTQAARDSSDVYSTQKNSSEQFEKWRFSIPFKLAQVVQAVCGPAMHLFGHKLAKDTASLTNRSISLLEERGTFWVT.

At 1–19 the chain is on the cytoplasmic side; that stretch reads MEKGLALPQDCRDLVHNLK. A helical; Signal-anchor for type II membrane protein membrane pass occupies residues 20-38; that stretch reads IRGRYVLFLAFVVIVFIFI. The Lumenal segment spans residues 39 to 474; the sequence is EKENKIISRV…LEERGTFWVT (436 aa). Residues asparagine 63, asparagine 74, and asparagine 96 are each glycosylated (N-linked (GlcNAc...) asparagine). 137–143 is a 3'-phosphoadenylyl sulfate binding site; sequence TRTGSSF. N-linked (GlcNAc...) asparagine glycosylation occurs at asparagine 252. Residue 297–305 participates in 3'-phosphoadenylyl sulfate binding; that stretch reads RDPRAVLAS. Asparagine 415 and asparagine 459 each carry an N-linked (GlcNAc...) asparagine glycan.

Belongs to the sulfotransferase 1 family. Gal/GlcNAc/GalNAc subfamily. N-glycosylated.

It localises to the golgi apparatus membrane. The catalysed reaction is chondroitin beta-D-glucuronate + n 3'-phosphoadenylyl sulfate = chondroitin 6'-sulfate + n adenosine 3',5'-bisphosphate + n H(+). It catalyses the reaction 3'-phosphoadenylyl sulfate + keratan = adenosine 3',5'-bisphosphate + keratan 6'-sulfate.. In terms of biological role, sulfotransferase that utilizes 3'-phospho-5'-adenylyl sulfate (PAPS) as sulfonate donor to catalyze the transfer of sulfate to position 6 of the N-acetylgalactosamine (GalNAc) residue of chondroitin. Chondroitin sulfate constitutes the predominant proteoglycan present in cartilage and is distributed on the surfaces of many cells and extracellular matrices. Catalyzes with a lower efficiency the sulfation of Gal residues of keratan sulfate, another glycosaminoglycan. Can also catalyze the sulfation of the Gal residues in sialyl N-acetyllactosamine (sialyl LacNAc) oligosaccharides. May play a role in the maintenance of naive T-lymphocytes in the spleen. In Rattus norvegicus (Rat), this protein is Carbohydrate sulfotransferase 3 (Chst3).